A 401-amino-acid chain; its full sequence is Type I restriction enzyme EcoprrI specificity subunit (401 aa).

Belongs to the type-I restriction system S methylase family. As to quaternary structure, the type I restriction/modification system is composed of three polypeptides R, M and S; the restriction enzyme has stoichiometry R(2)M(2)S(1) while the methyltransferase is M(2)S(1).

Functionally, the specificity (S) subunit of a type I restriction enzyme; this subunit dictates DNA sequence specificity. The M and S subunits together form a methyltransferase (MTase) that methylates two adenine residues of the sequence 5'-CCAN(7)ATGC-3'. In the presence of the R subunit the complex can also act as an endonuclease, binding to the same target sequence but cutting the DNA some distance from this site. Whether the DNA is cut or modified depends on the methylation state of the target sequence. When the target site is unmodified, the DNA is cut. When the target site is hemimethylated, the complex acts as a maintenance MTase modifying the DNA so that both strands become methylated. After locating a non-methylated recognition site, the enzyme complex serves as a molecular motor that translocates DNA in an ATP-dependent manner until a collision occurs that triggers cleavage. This chain is Type I restriction enzyme EcoprrI specificity subunit (prrB), found in Escherichia coli.